The following is a 301-amino-acid chain: Ribosomal protein L11 methyltransferase (301 aa).

S-adenosyl-L-methionine is bound by residues T146, G167, D189, and N234.

It belongs to the methyltransferase superfamily. PrmA family.

Its subcellular location is the cytoplasm. The catalysed reaction is L-lysyl-[protein] + 3 S-adenosyl-L-methionine = N(6),N(6),N(6)-trimethyl-L-lysyl-[protein] + 3 S-adenosyl-L-homocysteine + 3 H(+). Methylates ribosomal protein L11. This chain is Ribosomal protein L11 methyltransferase, found in Acinetobacter baumannii (strain SDF).